The primary structure comprises 261 residues: Cytochrome c oxidase subunit 3 (261 aa).

Residues 1–15 are Mitochondrial matrix-facing; that stretch reads MTHQTHAYHMVNPSP. The chain crosses the membrane as a helical span at residues 16-34; that stretch reads WPLTGALSALLMTSGLIMW. Over 35–40 the chain is Mitochondrial intermembrane; it reads FHFNSV. The chain crosses the membrane as a helical span at residues 41–66; that stretch reads ALLMLGLTTNMLTMYQWWRDVIREST. Residues 67–72 are Mitochondrial matrix-facing; that stretch reads FQGHHT. The helical transmembrane segment at 73 to 105 threads the bilayer; it reads PNVQKGLRYGMILFIISEVLFFTGFFWAFYHSS. At 106-128 the chain is on the mitochondrial intermembrane side; sequence LAPTPELGGCWPPTGIHPLNPLE. A helical membrane pass occupies residues 129 to 152; that stretch reads VPLLNTSVLLASGVSITWAHHSLM. Residues 153-155 lie on the Mitochondrial matrix side of the membrane; the sequence is EGN. The chain crosses the membrane as a helical span at residues 156–183; the sequence is RNHMLQALFITIALGVYFTLLQASEYYE. Topologically, residues 184-190 are mitochondrial intermembrane; the sequence is APFTISD. Residues 191-223 traverse the membrane as a helical segment; sequence GVYGSTFFVATGFHGLHVIIGSTFLIVCFFRQL. Residues 224 to 232 are Mitochondrial matrix-facing; sequence KFHFTSSHH. A helical transmembrane segment spans residues 233–256; sequence FGFEAAAWYWHFVDVVWLFLYVSI. Over 257–261 the chain is Mitochondrial intermembrane; that stretch reads YWWGS.

The protein belongs to the cytochrome c oxidase subunit 3 family. As to quaternary structure, component of the cytochrome c oxidase (complex IV, CIV), a multisubunit enzyme composed of 14 subunits. The complex is composed of a catalytic core of 3 subunits MT-CO1, MT-CO2 and MT-CO3, encoded in the mitochondrial DNA, and 11 supernumerary subunits COX4I, COX5A, COX5B, COX6A, COX6B, COX6C, COX7A, COX7B, COX7C, COX8 and NDUFA4, which are encoded in the nuclear genome. The complex exists as a monomer or a dimer and forms supercomplexes (SCs) in the inner mitochondrial membrane with NADH-ubiquinone oxidoreductase (complex I, CI) and ubiquinol-cytochrome c oxidoreductase (cytochrome b-c1 complex, complex III, CIII), resulting in different assemblies (supercomplex SCI(1)III(2)IV(1) and megacomplex MCI(2)III(2)IV(2)).

It is found in the mitochondrion inner membrane. The enzyme catalyses 4 Fe(II)-[cytochrome c] + O2 + 8 H(+)(in) = 4 Fe(III)-[cytochrome c] + 2 H2O + 4 H(+)(out). Component of the cytochrome c oxidase, the last enzyme in the mitochondrial electron transport chain which drives oxidative phosphorylation. The respiratory chain contains 3 multisubunit complexes succinate dehydrogenase (complex II, CII), ubiquinol-cytochrome c oxidoreductase (cytochrome b-c1 complex, complex III, CIII) and cytochrome c oxidase (complex IV, CIV), that cooperate to transfer electrons derived from NADH and succinate to molecular oxygen, creating an electrochemical gradient over the inner membrane that drives transmembrane transport and the ATP synthase. Cytochrome c oxidase is the component of the respiratory chain that catalyzes the reduction of oxygen to water. Electrons originating from reduced cytochrome c in the intermembrane space (IMS) are transferred via the dinuclear copper A center (CU(A)) of subunit 2 and heme A of subunit 1 to the active site in subunit 1, a binuclear center (BNC) formed by heme A3 and copper B (CU(B)). The BNC reduces molecular oxygen to 2 water molecules using 4 electrons from cytochrome c in the IMS and 4 protons from the mitochondrial matrix. This chain is Cytochrome c oxidase subunit 3 (MT-CO3), found in Nanger granti (Grant's gazelle).